The primary structure comprises 216 residues: Snake venom metalloproteinase HT-1 (216 aa).

The 87-residue stretch at 8–94 (PPVCGNELLE…DCPMDDFHRN (87 aa)) folds into the Disintegrin domain. V10, N13, L15, E17, E20, and D23 together coordinate Ca(2+). Cystine bridges form between C11-C40, C22-C35, C24-C30, C34-C57, C48-C54, C53-C79, C66-C86, C73-C105, C98-C110, C117-C167, C132-C178, C145-C155, C162-C204, and C198-C209. A D/ECD-tripeptide motif is present at residues 72-74 (ECD). N-linked (GlcNAc...) asparagine glycosylation occurs at N175.

It belongs to the venom metalloproteinase (M12B) family. P-III subfamily. P-IIIa sub-subfamily. As to quaternary structure, monomer. Zn(2+) serves as cofactor. In terms of tissue distribution, expressed by the venom gland.

The protein localises to the secreted. Functionally, zinc protease from snake venom that induces hemorrhage. The protein is Snake venom metalloproteinase HT-1 of Crotalus ruber ruber (Red diamond rattlesnake).